The sequence spans 62 residues: uncharacterized protein (62 aa).

It localises to the plastid. The protein localises to the chloroplast. This is an uncharacterized protein from Guillardia theta (Cryptophyte).